Here is a 180-residue protein sequence, read N- to C-terminus: Putative adenylate kinase (180 aa).

Residues G10, G12, K13, T14, and T15 each contribute to the ATP site. The segment at 30 to 50 is NMP; it reads SVKELALSRGIGERVSDEIEI. The interval 99-109 is LID; sequence ARGYSKKKLAE. Positions 100 and 138 each coordinate ATP.

It belongs to the adenylate kinase family. AK6 subfamily. In terms of assembly, interacts with uS11. Not a structural component of 40S pre-ribosomes, but transiently interacts with them by binding to uS11.

It catalyses the reaction AMP + ATP = 2 ADP. The catalysed reaction is ATP + H2O = ADP + phosphate + H(+). In terms of biological role, broad-specificity nucleoside monophosphate (NMP) kinase that catalyzes the reversible transfer of the terminal phosphate group between nucleoside triphosphates and monophosphates. Also has ATPase activity. Involved in the late maturation steps of the 30S ribosomal particles, specifically 16S rRNA maturation. While NMP activity is not required for ribosome maturation, ATPase activity is. Associates transiently with small ribosomal subunit protein uS11. ATP hydrolysis breaks the interaction with uS11. May temporarily remove uS11 from the ribosome to enable a conformational change of the ribosomal RNA that is needed for the final maturation step of the small ribosomal subunit. The polypeptide is Putative adenylate kinase (Thermococcus onnurineus (strain NA1)).